Reading from the N-terminus, the 368-residue chain is S-adenosylmethionine decarboxylase proenzyme 1 (368 aa).

Residues Glu-9 and Arg-12 contribute to the active site. The active-site Schiff-base intermediate with substrate; via pyruvic acid is Ser-69. Ser-69 carries the post-translational modification Pyruvic acid (Ser); by autocatalysis. The Proton donor; for catalytic activity role is filled by Cys-83. Active-site proton acceptor; for processing activity residues include Ser-234 and His-247.

This sequence belongs to the eukaryotic AdoMetDC family. It depends on pyruvate as a cofactor. In terms of processing, is synthesized initially as an inactive proenzyme. Formation of the active enzyme involves a self-maturation process in which the active site pyruvoyl group is generated from an internal serine residue via an autocatalytic post-translational modification. Two non-identical subunits are generated from the proenzyme in this reaction, and the pyruvate is formed at the N-terminus of the alpha chain, which is derived from the carboxyl end of the proenzyme. The post-translation cleavage follows an unusual pathway, termed non-hydrolytic serinolysis, in which the side chain hydroxyl group of the serine supplies its oxygen atom to form the C-terminus of the beta chain, while the remainder of the serine residue undergoes an oxidative deamination to produce ammonia and the pyruvoyl group blocking the N-terminus of the alpha chain.

It carries out the reaction S-adenosyl-L-methionine + H(+) = S-adenosyl 3-(methylsulfanyl)propylamine + CO2. It functions in the pathway amine and polyamine biosynthesis; S-adenosylmethioninamine biosynthesis; S-adenosylmethioninamine from S-adenosyl-L-methionine: step 1/1. This Brassica juncea (Indian mustard) protein is S-adenosylmethionine decarboxylase proenzyme 1 (SAMDC1).